Consider the following 894-residue polypeptide: LRR receptor-like serine/threonine-protein kinase IOS1 (894 aa).

The first 23 residues, 1–23, serve as a signal peptide directing secretion; the sequence is MAFSSCFLLVLLQIFSALLLCLA. Residues 24–515 lie on the Extracellular side of the membrane; the sequence is QDQSGFISLD…KKKKNTVIAP (492 aa). Asparagine 48, asparagine 95, asparagine 137, asparagine 179, asparagine 223, asparagine 230, asparagine 260, asparagine 287, asparagine 309, asparagine 338, asparagine 399, asparagine 441, asparagine 462, and asparagine 469 each carry an N-linked (GlcNAc...) asparagine glycan. LRR repeat units follow at residues 431–457 and 459–479; these read LTSL…NMET and KLIN…LLDK. A helical transmembrane segment spans residues 516–536; the sequence is VAASLVSVFLIGAGIVTFLIL. The Cytoplasmic segment spans residues 537–894; it reads KRKKRTKLGL…FTTELNPGAR (358 aa). Threonine 577 is subject to Phosphothreonine. A Protein kinase domain is found at 586–858; it reads NNFERVLGRG…QVVMDLKECL (273 aa). Residues 592–600 and lysine 613 each bind ATP; that span reads LGRGGFGVV. Position 658 is a phosphotyrosine (tyrosine 658). Aspartate 710 (proton acceptor) is an active-site residue. A Phosphoserine modification is found at serine 744. Residues threonine 745 and threonine 750 each carry the phosphothreonine modification. Position 758 is a phosphotyrosine (tyrosine 758).

Belongs to the protein kinase superfamily. Ser/Thr protein kinase family. As to quaternary structure, homodimerization. Interacts with BAK1 and FLS2; triggers FLS2-BAK1 complex formation upon microbe-associated molecular patterns (MAMPs) treatment. Also binds to CERK1 and EFR. As to expression, expressed in roots, cotyledons, leaves, flowers and siliques.

The protein localises to the cell membrane. In terms of biological role, negatively regulates the abscisic acid (ABA) signaling pathway. Required for full susceptibility to filamentous (hemi)biotrophic oomycetes (e.g. H.arabidopsidis and P.parasitica) and fungal (e.g. E.cruciferarum) pathogens, probably by triggering the repression of ABA-sensitive COLD REGULATED and RESISTANCE TO DESICCATION genes during infection, but independently of immune responses. Involved in BAK1-dependent and BAK1-independent microbe-associated molecular patterns (MAMPs)-triggered immunity (PTI) leading to defense responses, including callose deposition and MAPK cascade activation, toward pathogenic bacteria (e.g. P.syringae). Required for chitin-mediated PTI. The protein is LRR receptor-like serine/threonine-protein kinase IOS1 of Arabidopsis thaliana (Mouse-ear cress).